The primary structure comprises 391 residues: Autophagy-related protein 18d (391 aa).

A disordered region spans residues 1-24; the sequence is MDPRRNFQPGGYDSRNTFTSGSFG. 4 WD repeats span residues 31 to 69, 74 to 118, 203 to 243, and 248 to 287; these read SDEA…ETFR, DGGF…CISE, AHDS…RLQE, and VDRA…IGED.

This sequence belongs to the WD repeat PROPPIN family. In terms of assembly, component of the PI(3,5)P2 regulatory complex at least composed of ATG18, SAC/FIG4, FAB1 and VAC14. As to expression, expressed in roots, stems, flowers and leaves.

It localises to the preautophagosomal structure membrane. The protein resides in the vacuole membrane. In terms of biological role, the PI(3,5)P2 regulatory complex regulates both the synthesis and turnover of phosphatidylinositol 3,5-bisphosphate (PtdIns(3,5)P2). Required for autophagy. This Arabidopsis thaliana (Mouse-ear cress) protein is Autophagy-related protein 18d (ATG18D).